The primary structure comprises 141 residues: MPKNKGKGGKNRRRGKNENEQKRELQFKEEGQEYAQVLRMLGNGRLEASCFDGEKRLCHISGRLRKKEWINNGDIILIQLRDYQNDKADVILRYNVDEARNLKTYGELPETARINETDAFDDVEDIPFEFVAEDDIDIDTL.

Basic residues predominate over residues methionine 1–glycine 15. The interval methionine 1–lysine 28 is disordered. Residues lysine 16–lysine 28 are compositionally biased toward basic and acidic residues. An S1-like domain is found at glutamine 21 to asparagine 95.

The protein belongs to the eIF-1A family.

Functionally, seems to be required for maximal rate of protein biosynthesis. Enhances ribosome dissociation into subunits and stabilizes the binding of the initiator Met-tRNA(I) to 40 S ribosomal subunits. This chain is Eukaryotic translation initiation factor 1A (eif1a), found in Dictyostelium discoideum (Social amoeba).